A 349-amino-acid chain; its full sequence is CCN family member 2 (349 aa).

Residues 1–26 (MTAASMGPVRVAFVVLLALCSRPAVG) form the signal peptide. The IGFBP N-terminal domain occupies 27 to 98 (QNCSGPCRCP…NRKIGVCTAK (72 aa)). Asn-28 is a glycosylation site (N-linked (GlcNAc...) asparagine). Intrachain disulfides connect Cys-29-Cys-54, Cys-33-Cys-56, Cys-35-Cys-57, Cys-43-Cys-60, Cys-68-Cys-82, and Cys-74-Cys-95. The 67-residue stretch at 101–167 (APCIFGGTVY…GKCCEEWVCD (67 aa)) folds into the VWFC domain. A TSP type-1 domain is found at 198 to 243 (NCLVQTTEWSACSKTCGMGISTRVTNDNASCRLEKQSRLCMVRPCE). N-linked (GlcNAc...) asparagine glycosylation occurs at Asn-225. Positions 247 to 349 (EENIKKGKKC…YYRKMYGDMA (103 aa)) are heparin-binding. 5 disulfides stabilise this stretch: Cys-256/Cys-293, Cys-273/Cys-307, Cys-284/Cys-323, Cys-287/Cys-325, and Cys-292/Cys-329. The CTCK domain occupies 256 to 330 (CIRTPKISKP…KTCACHYNCP (75 aa)).

The protein belongs to the CCN family. As to quaternary structure, monomer. Interacts with TSKU. Expressed in bone marrow and thymic cells. Also expressed one of two Wilms tumors tested.

It is found in the secreted. The protein resides in the extracellular space. Its subcellular location is the extracellular matrix. Major connective tissue mitoattractant secreted by vascular endothelial cells. Promotes proliferation and differentiation of chondrocytes. Is involved in the stimulation of osteoblast differentiation and has a critical role in osteogenesis. Mediates heparin- and divalent cation-dependent cell adhesion in many cell types including fibroblasts, myofibroblasts, endothelial and epithelial cells. Enhances fibroblast growth factor-induced DNA synthesis. The polypeptide is CCN family member 2 (Homo sapiens (Human)).